A 321-amino-acid polypeptide reads, in one-letter code: Inner membrane protein YtfF (321 aa).

At methionine 1 to glycine 4 the chain is on the cytoplasmic side. Residues valine 5–valine 25 traverse the membrane as a helical segment. Residues leucine 13 to isoleucine 141 enclose the EamA domain. At proline 26 to alanine 30 the chain is on the periplasmic side. A helical transmembrane segment spans residues methionine 31 to leucine 51. Residues glycine 52–leucine 65 lie on the Cytoplasmic side of the membrane. The chain crosses the membrane as a helical span at residues threonine 66–isoleucine 86. Residues glutamine 87 to proline 92 lie on the Periplasmic side of the membrane. A helical membrane pass occupies residues valine 93–tyrosine 113. Residues serine 114–leucine 120 are Cytoplasmic-facing. The helical transmembrane segment at alanine 121–isoleucine 141 threads the bilayer. Topologically, residues alanine 142–alanine 154 are periplasmic. Residues arginine 155–leucine 175 traverse the membrane as a helical segment. Over arginine 176–threonine 194 the chain is Cytoplasmic. A helical transmembrane segment spans residues alanine 195–leucine 215. Residues asparagine 216–proline 230 lie on the Periplasmic side of the membrane. A helical membrane pass occupies residues leucine 231–cysteine 251. Topologically, residues tryptophan 252 to threonine 261 are cytoplasmic. The chain crosses the membrane as a helical span at residues valine 262–leucine 282. The Periplasmic segment spans residues arginine 283–glutamine 285. Residues methionine 286 to valine 306 traverse the membrane as a helical segment. Residues arginine 307 to serine 321 lie on the Cytoplasmic side of the membrane.

The protein localises to the cell inner membrane. This Escherichia coli (strain K12) protein is Inner membrane protein YtfF (ytfF).